Here is a 125-residue protein sequence, read N- to C-terminus: Ino eighty subunit 5 (125 aa).

Thr-124 is subject to Phosphothreonine.

In terms of assembly, component of the chromatin-remodeling INO80 complex, at least composed of ARP4, ARP5, ARP8, RVB1, RVB2, TAF14, NHP10, IES1, IES3, IES4, IES6, ACT1, IES2, IES5 and INO80.

It is found in the nucleus. The sequence is that of Ino eighty subunit 5 (IES5) from Saccharomyces cerevisiae (strain ATCC 204508 / S288c) (Baker's yeast).